The sequence spans 289 residues: Purine nucleoside phosphorylase (289 aa).

At M1 the chain carries N-acetylmethionine. Phosphate is bound by residues S33, H64, and 84–86 (RFH). Y88 contributes to the a purine D-ribonucleoside binding site. A116 is a binding site for phosphate. A purine D-ribonucleoside-binding residues include E201 and M219. S220 is a binding site for phosphate. N243 contacts a purine D-ribonucleoside. S251 bears the Phosphoserine mark. H257 is an a purine D-ribonucleoside binding site.

It belongs to the PNP/MTAP phosphorylase family. As to quaternary structure, homotrimer. As to expression, expressed in red blood cells; overexpressed in red blood cells (cytoplasm) of patients with hereditary non-spherocytic hemolytic anemia of unknown etiology.

It is found in the cytoplasm. It catalyses the reaction inosine + phosphate = alpha-D-ribose 1-phosphate + hypoxanthine. The catalysed reaction is guanosine + phosphate = alpha-D-ribose 1-phosphate + guanine. The enzyme catalyses 2'-deoxyguanosine + phosphate = 2-deoxy-alpha-D-ribose 1-phosphate + guanine. It carries out the reaction 2'-deoxyinosine + phosphate = 2-deoxy-alpha-D-ribose 1-phosphate + hypoxanthine. It functions in the pathway purine metabolism; purine nucleoside salvage. Inhibited by 5'-deaza-1'-aza-2c-deoxy-1'-(9-methylene)-Immucilin-G (DADMe-ImmG). Its function is as follows. Catalyzes the phosphorolytic breakdown of the N-glycosidic bond in the beta-(deoxy)ribonucleoside molecules, with the formation of the corresponding free purine bases and pentose-1-phosphate. Preferentially acts on 6-oxopurine nucleosides including inosine and guanosine. The chain is Purine nucleoside phosphorylase (PNP) from Homo sapiens (Human).